The chain runs to 346 residues: N-acetyl-gamma-glutamyl-phosphate reductase (346 aa).

The active site involves cysteine 151.

The protein belongs to the NAGSA dehydrogenase family. Type 1 subfamily.

Its subcellular location is the cytoplasm. The catalysed reaction is N-acetyl-L-glutamate 5-semialdehyde + phosphate + NADP(+) = N-acetyl-L-glutamyl 5-phosphate + NADPH + H(+). It participates in amino-acid biosynthesis; L-arginine biosynthesis; N(2)-acetyl-L-ornithine from L-glutamate: step 3/4. Catalyzes the NADPH-dependent reduction of N-acetyl-5-glutamyl phosphate to yield N-acetyl-L-glutamate 5-semialdehyde. The protein is N-acetyl-gamma-glutamyl-phosphate reductase of Ehrlichia chaffeensis (strain ATCC CRL-10679 / Arkansas).